Reading from the N-terminus, the 590-residue chain is Probable metalloendopeptidase G1-type (590 aa).

His41 is a binding site for Zn(2+). Residue Glu44 is part of the active site. His45 is a Zn(2+) binding site.

The protein belongs to the peptidase M44 family. Zn(2+) is required as a cofactor.

Seems to be involved in viral proteins maturation by cleavage at Ala-Gly-|-Xaa motifs. The protein is Probable metalloendopeptidase G1-type of Oryctolagus cuniculus (Rabbit).